Here is a 256-residue protein sequence, read N- to C-terminus: MPRYRLLVEYDGTPFNGWQRQDKGLSVQGILEKAVEKLCGVPCTLHAAGRTDAGVHATGQVAHVDLPRDYPADTVRDALNYHMKPKPVAVVAAELVDEDFHARFSAVGRAYLYRIVNRRAPLALDQHRAWWVPVALDAEAMAEGARRLLGHHDFSTFRASECQAKSPMKTLDVLDVTRVGEEIRIVAEARSFLHHQVRNMVGTLKLVGEGKWSPDDMAKVLEARDRTKGGPTAPAAGLVLTGVSYSASGGKSGPTG.

The Nucleophile role is filled by D52. Y111 contributes to the substrate binding site.

It belongs to the tRNA pseudouridine synthase TruA family. Homodimer.

It catalyses the reaction uridine(38/39/40) in tRNA = pseudouridine(38/39/40) in tRNA. Formation of pseudouridine at positions 38, 39 and 40 in the anticodon stem and loop of transfer RNAs. This chain is tRNA pseudouridine synthase A, found in Paramagnetospirillum magneticum (strain ATCC 700264 / AMB-1) (Magnetospirillum magneticum).